Consider the following 224-residue polypeptide: ATP-dependent dethiobiotin synthetase BioD (224 aa).

Glycine 14–valine 19 is a binding site for ATP. Residue threonine 18 coordinates Mg(2+). The active site involves lysine 39. Serine 43 lines the substrate pocket. ATP is bound by residues aspartate 56, glutamate 117–glycine 120, and asparagine 177–glutamate 178. Residues aspartate 56 and glutamate 117 each coordinate Mg(2+).

It belongs to the dethiobiotin synthetase family. As to quaternary structure, homodimer. Mg(2+) serves as cofactor.

It is found in the cytoplasm. The enzyme catalyses (7R,8S)-7,8-diammoniononanoate + CO2 + ATP = (4R,5S)-dethiobiotin + ADP + phosphate + 3 H(+). Its pathway is cofactor biosynthesis; biotin biosynthesis; biotin from 7,8-diaminononanoate: step 1/2. Functionally, catalyzes a mechanistically unusual reaction, the ATP-dependent insertion of CO2 between the N7 and N8 nitrogen atoms of 7,8-diaminopelargonic acid (DAPA, also called 7,8-diammoniononanoate) to form a ureido ring. The sequence is that of ATP-dependent dethiobiotin synthetase BioD from Xanthomonas campestris pv. campestris (strain B100).